We begin with the raw amino-acid sequence, 68 residues long: uncharacterized protein (68 aa).

This is an uncharacterized protein from Escherichia coli O6:H1 (strain CFT073 / ATCC 700928 / UPEC).